Reading from the N-terminus, the 488-residue chain is Probable glycine dehydrogenase (decarboxylating) subunit 2 (488 aa).

Lysine 273 carries the post-translational modification N6-(pyridoxal phosphate)lysine.

Belongs to the GcvP family. C-terminal subunit subfamily. As to quaternary structure, the glycine cleavage system is composed of four proteins: P, T, L and H. In this organism, the P 'protein' is a heterodimer of two subunits. It depends on pyridoxal 5'-phosphate as a cofactor.

The catalysed reaction is N(6)-[(R)-lipoyl]-L-lysyl-[glycine-cleavage complex H protein] + glycine + H(+) = N(6)-[(R)-S(8)-aminomethyldihydrolipoyl]-L-lysyl-[glycine-cleavage complex H protein] + CO2. The glycine cleavage system catalyzes the degradation of glycine. The P protein binds the alpha-amino group of glycine through its pyridoxal phosphate cofactor; CO(2) is released and the remaining methylamine moiety is then transferred to the lipoamide cofactor of the H protein. The sequence is that of Probable glycine dehydrogenase (decarboxylating) subunit 2 from Halalkalibacterium halodurans (strain ATCC BAA-125 / DSM 18197 / FERM 7344 / JCM 9153 / C-125) (Bacillus halodurans).